The chain runs to 390 residues: Magnesium-protoporphyrin IX monomethyl ester [oxidative] cyclase (390 aa).

The protein belongs to the AcsF family. Fe cation is required as a cofactor.

It carries out the reaction Mg-protoporphyrin IX 13-monomethyl ester + 3 NADPH + 3 O2 + 2 H(+) = 3,8-divinyl protochlorophyllide a + 3 NADP(+) + 5 H2O. It participates in porphyrin-containing compound metabolism; chlorophyll biosynthesis (light-independent). Functionally, catalyzes the formation of the isocyclic ring in chlorophyll biosynthesis. Mediates the cyclase reaction, which results in the formation of divinylprotochlorophyllide (Pchlide) characteristic of all chlorophylls from magnesium-protoporphyrin IX 13-monomethyl ester (MgPMME). The protein is Magnesium-protoporphyrin IX monomethyl ester [oxidative] cyclase of Prochlorococcus marinus (strain MIT 9215).